Consider the following 465-residue polypeptide: Ribulose bisphosphate carboxylase large chain (465 aa).

K4 is subject to N6,N6,N6-trimethyllysine. The substrate site is built by N113 and T163. K165 functions as the Proton acceptor in the catalytic mechanism. A substrate-binding site is contributed by K167. The Mg(2+) site is built by K191, D193, and E194. An N6-carboxylysine modification is found at K191. H284 serves as the catalytic Proton acceptor. Substrate-binding residues include R285, H317, and S369.

It belongs to the RuBisCO large chain family. Type I subfamily. In terms of assembly, heterohexadecamer of 8 large chains and 8 small chains; disulfide-linked. The disulfide link is formed within the large subunit homodimers. It depends on Mg(2+) as a cofactor. In terms of processing, the disulfide bond which can form in the large chain dimeric partners within the hexadecamer appears to be associated with oxidative stress and protein turnover.

It is found in the plastid. Its subcellular location is the chloroplast. The enzyme catalyses 2 (2R)-3-phosphoglycerate + 2 H(+) = D-ribulose 1,5-bisphosphate + CO2 + H2O. It carries out the reaction D-ribulose 1,5-bisphosphate + O2 = 2-phosphoglycolate + (2R)-3-phosphoglycerate + 2 H(+). RuBisCO catalyzes two reactions: the carboxylation of D-ribulose 1,5-bisphosphate, the primary event in carbon dioxide fixation, as well as the oxidative fragmentation of the pentose substrate in the photorespiration process. Both reactions occur simultaneously and in competition at the same active site. In Combretum indicum (Rangoon creeper), this protein is Ribulose bisphosphate carboxylase large chain.